The primary structure comprises 612 residues: PAN2-PAN3 deadenylation complex subunit PAN3 (612 aa).

Residues 10-39 form a C3H1-type zinc finger; the sequence is WAKDTPCKNITIYGYCKYENDGCIFNHGKP. The span at 44 to 62 shows a compositional bias: low complexity; it reads SNTGGAAAGSAEDSAASGG. The segment at 44–64 is disordered; sequence SNTGGAAAGSAEDSAASGGVT. 2 short sequence motifs (PABPC-interacting motif-2 (PAM-2)) span residues 84 to 104 and 111 to 131; these read SVAI…IVSS and TAFT…SANV. Residues 231–481 form a pseudokinase domain region; that stretch reads QVFPSDGNLP…TIAEFTALFS (251 aa). ATP is bound by residues R286, 336-343, and 389-390; these read DYYPQSNS and DK. Residues 482-520 adopt a coiled-coil conformation; it reads HKMLDIISSSQTYSEYIEQHLSRELENGRLFRLMCKLNF. Positions 521 to 612 are knob domain; the sequence is IFGRMESSMD…IDSTFRSMTQ (92 aa).

This sequence belongs to the protein kinase superfamily. PAN3 family. Homodimer. Forms a heterotrimer with a catalytic subunit PAN2 to form the poly(A)-nuclease (PAN) deadenylation complex. Interacts (via PAM-2 motif) with poly(A)-binding protein PAB1 (via PABC domain), conferring substrate specificity of the enzyme complex.

Its subcellular location is the cytoplasm. Its function is as follows. Regulatory subunit of the poly(A)-nuclease (PAN) deadenylation complex, one of two cytoplasmic mRNA deadenylases involved in mRNA turnover. PAN specifically shortens poly(A) tails of RNA and the activity is stimulated by poly(A)-binding protein PAB1. PAN deadenylation is followed by rapid degradation of the shortened mRNA tails by the CCR4-NOT complex. Deadenylated mRNAs are then degraded by two alternative mechanisms, namely exosome-mediated 3'-5' exonucleolytic degradation, or deadenylation-dependent mRNA decaping and subsequent 5'-3' exonucleolytic degradation by XRN1. May also be involved in post-transcriptional maturation of mRNA poly(A) tails. PAN3 acts as a positive regulator for PAN activity, recruiting the catalytic subunit PAN2 to mRNA via its interaction with RNA and with PAB1. This chain is PAN2-PAN3 deadenylation complex subunit PAN3, found in Eremothecium gossypii (strain ATCC 10895 / CBS 109.51 / FGSC 9923 / NRRL Y-1056) (Yeast).